Consider the following 242-residue polypeptide: MAKVSMRDMLQAGVHFGHQTRFWNPKMKPFIFGARNNVHIINLEKTVPMFDDALNYLSSVASKKGKILFVGTKRAATEAVKEAAANCEQFYVNHRWLGGMLTNWKTVRQSIKRLKDLEAQSLDGTFEKLTKKEALMRTREMEKLEKSLGGIKDMGGLPDVLFVIDADHEHIAIKEANNLGIPVVSIVDTNSNPDGVDYIIPGNDDAIRAVQLYLNAAADSIKTARELDIVVQAEQDGFVEAN.

The protein belongs to the universal ribosomal protein uS2 family.

The chain is Small ribosomal subunit protein uS2 from Tolumonas auensis (strain DSM 9187 / NBRC 110442 / TA 4).